A 307-amino-acid chain; its full sequence is UDP-N-acetylenolpyruvoylglucosamine reductase (307 aa).

One can recognise an FAD-binding PCMH-type domain in the interval 34–198 (LGGKADVYIT…LEATFALKKA (165 aa)). Arg177 is an active-site residue. The active-site Proton donor is the Ser227. Residue Glu297 is part of the active site.

This sequence belongs to the MurB family. Requires FAD as cofactor.

It localises to the cytoplasm. The enzyme catalyses UDP-N-acetyl-alpha-D-muramate + NADP(+) = UDP-N-acetyl-3-O-(1-carboxyvinyl)-alpha-D-glucosamine + NADPH + H(+). Its pathway is cell wall biogenesis; peptidoglycan biosynthesis. Cell wall formation. This Oceanobacillus iheyensis (strain DSM 14371 / CIP 107618 / JCM 11309 / KCTC 3954 / HTE831) protein is UDP-N-acetylenolpyruvoylglucosamine reductase.